The primary structure comprises 232 residues: Homeobox protein SAX-1 (232 aa).

Disordered regions lie at residues 1–64, 122–150, and 185–208; these read CLPD…SCAK, KQHP…RPAA, and LLGA…LCPS. The homeobox DNA-binding region spans 65 to 124; it reads PRRARTAFTYEQLVALENKFRATRYLSVCERLNLALSLSLTETQVKIWFQNRRTKWKKQH. Over residues 126–142 the composition is skewed to low complexity; the sequence is GADGAAAPAPPAAARCS.

The protein belongs to the NK-1 homeobox family. In terms of tissue distribution, transiently expressed in the birth zone of the whole spinal cord regardless of the axial level.

It localises to the nucleus. The polypeptide is Homeobox protein SAX-1 (SAX1) (Gallus gallus (Chicken)).